The primary structure comprises 315 residues: Lipoyl synthase (315 aa).

Residues Cys-62, Cys-67, Cys-73, Cys-88, Cys-92, Cys-95, and Ser-302 each contribute to the [4Fe-4S] cluster site. Residues 74 to 291 (FNHGAATFMI…KKIALKLGFS (218 aa)) enclose the Radical SAM core domain.

This sequence belongs to the radical SAM superfamily. Lipoyl synthase family. It depends on [4Fe-4S] cluster as a cofactor.

The protein localises to the cytoplasm. The enzyme catalyses [[Fe-S] cluster scaffold protein carrying a second [4Fe-4S](2+) cluster] + N(6)-octanoyl-L-lysyl-[protein] + 2 oxidized [2Fe-2S]-[ferredoxin] + 2 S-adenosyl-L-methionine + 4 H(+) = [[Fe-S] cluster scaffold protein] + N(6)-[(R)-dihydrolipoyl]-L-lysyl-[protein] + 4 Fe(3+) + 2 hydrogen sulfide + 2 5'-deoxyadenosine + 2 L-methionine + 2 reduced [2Fe-2S]-[ferredoxin]. Its pathway is protein modification; protein lipoylation via endogenous pathway; protein N(6)-(lipoyl)lysine from octanoyl-[acyl-carrier-protein]: step 2/2. Its function is as follows. Catalyzes the radical-mediated insertion of two sulfur atoms into the C-6 and C-8 positions of the octanoyl moiety bound to the lipoyl domains of lipoate-dependent enzymes, thereby converting the octanoylated domains into lipoylated derivatives. The chain is Lipoyl synthase from Ruthia magnifica subsp. Calyptogena magnifica.